The chain runs to 362 residues: 3-dehydroquinate synthase (362 aa).

Residues 71-76, 105-109, 129-130, lysine 142, lysine 151, and 169-172 each bind NAD(+); these read DGEQYK, GVVGD, TT, and CLKT. Zn(2+)-binding residues include glutamate 184, histidine 247, and histidine 264.

The protein belongs to the sugar phosphate cyclases superfamily. Dehydroquinate synthase family. Co(2+) serves as cofactor. Requires Zn(2+) as cofactor. The cofactor is NAD(+).

The protein resides in the cytoplasm. It carries out the reaction 7-phospho-2-dehydro-3-deoxy-D-arabino-heptonate = 3-dehydroquinate + phosphate. The protein operates within metabolic intermediate biosynthesis; chorismate biosynthesis; chorismate from D-erythrose 4-phosphate and phosphoenolpyruvate: step 2/7. Functionally, catalyzes the conversion of 3-deoxy-D-arabino-heptulosonate 7-phosphate (DAHP) to dehydroquinate (DHQ). This Shigella boydii serotype 18 (strain CDC 3083-94 / BS512) protein is 3-dehydroquinate synthase.